The chain runs to 33 residues: Photosystem II reaction center protein Psb30 (33 aa).

The helical transmembrane segment at 8-28 threads the bilayer; that stretch reads QLGSLLLITVAGPLIVFFLFI.

It belongs to the Psb30/Ycf12 family. In terms of assembly, PSII is composed of 1 copy each of membrane proteins PsbA, PsbB, PsbC, PsbD, PsbE, PsbF, PsbH, PsbI, PsbJ, PsbK, PsbL, PsbM, PsbT, PsbY, PsbZ, Psb30/Ycf12, peripheral proteins of the oxygen-evolving complex and a large number of cofactors. It forms dimeric complexes.

It is found in the plastid. The protein localises to the chloroplast thylakoid membrane. Functionally, a core subunit of photosystem II (PSII), probably helps stabilize the reaction center. The protein is Photosystem II reaction center protein Psb30 of Euglena anabaena (Euglenaria anabaena).